Reading from the N-terminus, the 510-residue chain is Light-independent protochlorophyllide reductase subunit B (510 aa).

Asp36 contacts [4Fe-4S] cluster. Residue Asp297 is the Proton donor of the active site. Gly432 to Met433 contacts substrate.

This sequence belongs to the ChlB/BchB/BchZ family. Protochlorophyllide reductase is composed of three subunits; ChlL, ChlN and ChlB. Forms a heterotetramer of two ChlB and two ChlN subunits. [4Fe-4S] cluster is required as a cofactor.

The protein resides in the plastid. It localises to the chloroplast. The catalysed reaction is chlorophyllide a + oxidized 2[4Fe-4S]-[ferredoxin] + 2 ADP + 2 phosphate = protochlorophyllide a + reduced 2[4Fe-4S]-[ferredoxin] + 2 ATP + 2 H2O. It participates in porphyrin-containing compound metabolism; chlorophyll biosynthesis (light-independent). Functionally, component of the dark-operative protochlorophyllide reductase (DPOR) that uses Mg-ATP and reduced ferredoxin to reduce ring D of protochlorophyllide (Pchlide) to form chlorophyllide a (Chlide). This reaction is light-independent. The NB-protein (ChlN-ChlB) is the catalytic component of the complex. The sequence is that of Light-independent protochlorophyllide reductase subunit B from Pinus thunbergii (Japanese black pine).